Here is a 330-residue protein sequence, read N- to C-terminus: Catharanthine synthase (330 aa).

The Involved in the stabilization of the negatively charged intermediate by the formation of the oxyanion hole signature appears at 81–83 (HGA). Gly84 lines the catharanthine pocket. The active-site Proton acceptor is the Ser173. Asp274 is an active-site residue. Tyr305 contacts catharanthine. Tyr305 serves as the catalytic Proton donor/acceptor.

This sequence belongs to the 'GDXG' lipolytic enzyme family. As to quaternary structure, interacts with dehydroprecondylocarpine acetate synthase (DPAS). In terms of tissue distribution, expressed in leaf epidermis.

It is found in the cytoplasm. The protein resides in the cytosol. Its subcellular location is the nucleus. The enzyme catalyses dehydrosecodine = catharanthine. It functions in the pathway alkaloid biosynthesis. In terms of biological role, component of iboga and aspidosperma monoterpenoid indole alkaloids (MIAs, e.g. tabersonine and catharanthine) biosynthesis pathway from 19E-geissoschizine, psychoactive compounds likely to be used in the treatment of opioid dependence. Catalyzes the conversion of dehydrosecodine to catharanthine. This is Catharanthine synthase from Catharanthus roseus (Madagascar periwinkle).